Reading from the N-terminus, the 286-residue chain is 3-hydroxyanthranilate 3,4-dioxygenase (286 aa).

Positions 1-160 are domain A (catalytic); the sequence is MERCVRVKSW…SEQYRTGKPN (160 aa). Arg43 lines the O2 pocket. The Fe cation site is built by His47, Glu53, and His91. Glu53 contacts substrate. The substrate site is built by Arg95 and Glu105. Residues 161–177 form a linker region; it reads PDQLLKEPPFPLSTRSV. Residues 178–286 form a domain B region; that stretch reads MEPMSLKAWL…QDPACKKPLG (109 aa).

It belongs to the 3-HAO family. In terms of assembly, monomer. Fe(2+) is required as a cofactor.

Its subcellular location is the cytoplasm. It localises to the cytosol. It catalyses the reaction 3-hydroxyanthranilate + O2 = (2Z,4Z)-2-amino-3-carboxymuconate 6-semialdehyde. The protein operates within cofactor biosynthesis; NAD(+) biosynthesis; quinolinate from L-kynurenine: step 3/3. Functionally, catalyzes the oxidative ring opening of 3-hydroxyanthranilate to 2-amino-3-carboxymuconate semialdehyde, which spontaneously cyclizes to quinolinate. In Rattus norvegicus (Rat), this protein is 3-hydroxyanthranilate 3,4-dioxygenase (Haao).